The following is a 321-amino-acid chain: Torsin-2A (321 aa).

The signal sequence occupies residues 1 to 27; it reads MAVARHGCPPWGSILGLLVLALAAAAA. 93-100 lines the ATP pocket; the sequence is GWTGTGKS. N-linked (GlcNAc...) asparagine glycosylation occurs at Asn-149.

Belongs to the ClpA/ClpB family. Torsin subfamily. As to quaternary structure, homohexamer. Interacts with TOR1AIP1.

It is found in the endoplasmic reticulum lumen. The polypeptide is Torsin-2A (Tor2a) (Rattus norvegicus (Rat)).